Consider the following 178-residue polypeptide: Fluoride-specific ion channel FluC 2 (178 aa).

A run of 4 helical transmembrane segments spans residues 25–45 (PDIHLDIVLVVFCGGAIGTAI), 63–83 (FVANMLACFCYAGLTAYLAGA), 97–117 (GLGMGVCGGLSTMSTLALEGF), and 129–149 (IAYLLVTFALGLVCASAGVWA). Na(+) contacts are provided by G104 and S107.

This sequence belongs to the fluoride channel Fluc/FEX (TC 1.A.43) family.

The protein resides in the cell membrane. The enzyme catalyses fluoride(in) = fluoride(out). With respect to regulation, na(+) is not transported, but it plays an essential structural role and its presence is essential for fluoride channel function. Functionally, fluoride-specific ion channel. Important for reducing fluoride concentration in the cell, thus reducing its toxicity. This chain is Fluoride-specific ion channel FluC 2, found in Bifidobacterium longum (strain NCC 2705).